We begin with the raw amino-acid sequence, 257 residues long: Zinc transporter ZupT (257 aa).

A run of 8 helical transmembrane segments spans residues 5 to 25 (LILT…GVIG), 32 to 52 (VLAF…LMEM), 61 to 81 (GMSP…YFAL), 109 to 129 (AILL…ATYV), 137 to 157 (LGFG…LAVA), 171 to 191 (ILWA…TWLI), 195 to 215 (MISP…MVAL), and 236 to 256 (GVLC…TAGF). 2 residues coordinate Fe(2+): Asn-120 and Glu-123. Zn(2+) contacts are provided by Glu-123 and His-148. Fe(2+)-binding residues include Asn-149, Glu-152, and Glu-181. Glu-152 lines the Zn(2+) pocket.

This sequence belongs to the ZIP transporter (TC 2.A.5) family. ZupT subfamily.

The protein localises to the cell inner membrane. The catalysed reaction is Zn(2+)(in) = Zn(2+)(out). In terms of biological role, mediates zinc uptake. May also transport other divalent cations. The polypeptide is Zinc transporter ZupT (Enterobacter sp. (strain 638)).